The chain runs to 91 residues: Probable Fe(2+)-trafficking protein (91 aa).

Belongs to the Fe(2+)-trafficking protein family. Monomer.

Its function is as follows. Could be a mediator in iron transactions between iron acquisition and iron-requiring processes, such as synthesis and/or repair of Fe-S clusters in biosynthetic enzymes. This Escherichia coli O6:H1 (strain CFT073 / ATCC 700928 / UPEC) protein is Probable Fe(2+)-trafficking protein.